We begin with the raw amino-acid sequence, 130 residues long: Histone H2A type 1-K (130 aa).

The tract at residues 1-22 is disordered; the sequence is MSGRGKQGGKARAKAKTRSSRA. N-acetylserine is present on serine 2. Residue serine 2 is modified to Phosphoserine; by RPS6KA5. A Citrulline; alternate modification is found at arginine 4. Symmetric dimethylarginine; by PRMT5; alternate is present on arginine 4. 2 positions are modified to N6-(2-hydroxyisobutyryl)lysine; alternate: lysine 6 and lysine 10. Residue lysine 6 is modified to N6-(beta-hydroxybutyryl)lysine; alternate. 2 positions are modified to N6-acetyllysine; alternate: lysine 6 and lysine 10. The segment covering 7 to 19 has biased composition (basic residues); the sequence is QGGKARAKAKTRS. At lysine 10 the chain carries N6-lactoyllysine; alternate. Lysine 10 carries the post-translational modification N6-succinyllysine; alternate. Glycyl lysine isopeptide (Lys-Gly) (interchain with G-Cter in ubiquitin) cross-links involve residues lysine 14 and lysine 16. Lysine 37 carries the N6-(2-hydroxyisobutyryl)lysine; alternate modification. Lysine 37 is subject to N6-(beta-hydroxybutyryl)lysine; alternate. N6-crotonyllysine; alternate is present on lysine 37. Residues lysine 75 and lysine 76 each carry the N6-(2-hydroxyisobutyryl)lysine modification. An N6-(2-hydroxyisobutyryl)lysine; alternate modification is found at lysine 96. Lysine 96 is modified (N6-succinyllysine; alternate). Position 96 is an N6-glutaryllysine; alternate (lysine 96). At glutamine 105 the chain carries N5-methylglutamine. An N6-(2-hydroxyisobutyryl)lysine; alternate modification is found at lysine 119. N6-crotonyllysine; alternate is present on residues lysine 119 and lysine 120. An N6-glutaryllysine; alternate mark is found at lysine 119 and lysine 120. Lysine 120 is subject to N6-(beta-hydroxybutyryl)lysine; alternate. A Glycyl lysine isopeptide (Lys-Gly) (interchain with G-Cter in ubiquitin); alternate cross-link involves residue lysine 120. Threonine 121 carries the post-translational modification Phosphothreonine; by DCAF1. Position 126 is an N6-(beta-hydroxybutyryl)lysine; alternate (lysine 126). An N6-crotonyllysine; alternate modification is found at lysine 126. At lysine 126 the chain carries N6-glutaryllysine; alternate.

This sequence belongs to the histone H2A family. The nucleosome is a histone octamer containing two molecules each of H2A, H2B, H3 and H4 assembled in one H3-H4 heterotetramer and two H2A-H2B heterodimers. The octamer wraps approximately 147 bp of DNA. In terms of processing, deiminated on Arg-4 in granulocytes upon calcium entry. Post-translationally, monoubiquitination of Lys-120 (H2AK119Ub) by RING1, TRIM37 and RNF2/RING2 complex gives a specific tag for epigenetic transcriptional repression and participates in X chromosome inactivation of female mammals. It is involved in the initiation of both imprinted and random X inactivation. Ubiquitinated H2A is enriched in inactive X chromosome chromatin. Ubiquitination of H2A functions downstream of methylation of 'Lys-27' of histone H3 (H3K27me). H2AK119Ub by RNF2/RING2 can also be induced by ultraviolet and may be involved in DNA repair. Following DNA double-strand breaks (DSBs), it is ubiquitinated through 'Lys-63' linkage of ubiquitin moieties by the E2 ligase UBE2N and the E3 ligases RNF8 and RNF168, leading to the recruitment of repair proteins to sites of DNA damage. Ubiquitination at Lys-14 and Lys-16 (H2AK13Ub and H2AK15Ub, respectively) in response to DNA damage is initiated by RNF168 that mediates monoubiquitination at these 2 sites, and 'Lys-63'-linked ubiquitin are then conjugated to monoubiquitin; RNF8 is able to extend 'Lys-63'-linked ubiquitin chains in vitro. Deubiquitinated by USP51 at Lys-14 and Lys-16 (H2AK13Ub and H2AK15Ub, respectively) after damaged DNA is repaired. H2AK119Ub and ionizing radiation-induced 'Lys-63'-linked ubiquitination (H2AK13Ub and H2AK15Ub) are distinct events. Phosphorylation on Ser-2 (H2AS1ph) is enhanced during mitosis. Phosphorylation on Ser-2 by RPS6KA5/MSK1 directly represses transcription. Acetylation of H3 inhibits Ser-2 phosphorylation by RPS6KA5/MSK1. Phosphorylation at Thr-121 (H2AT120ph) by DCAF1 is present in the regulatory region of many tumor suppresor genes and down-regulates their transcription. In terms of processing, symmetric dimethylation on Arg-4 by the PRDM1/PRMT5 complex may play a crucial role in the germ-cell lineage. Post-translationally, glutamine methylation at Gln-105 (H2AQ104me) by FBL is specifically dedicated to polymerase I. It is present at 35S ribosomal DNA locus and impairs binding of the FACT complex. Crotonylation (Kcr) is specifically present in male germ cells and marks testis-specific genes in post-meiotic cells, including X-linked genes that escape sex chromosome inactivation in haploid cells. Crotonylation marks active promoters and enhancers and confers resistance to transcriptional repressors. It is also associated with post-meiotically activated genes on autosomes. In terms of processing, hydroxybutyrylation of histones is induced by starvation. Post-translationally, lactylated in macrophages by EP300/P300 by using lactoyl-CoA directly derived from endogenous or exogenous lactate, leading to stimulates gene transcription.

It is found in the nucleus. The protein localises to the chromosome. Core component of nucleosome. Nucleosomes wrap and compact DNA into chromatin, limiting DNA accessibility to the cellular machineries which require DNA as a template. Histones thereby play a central role in transcription regulation, DNA repair, DNA replication and chromosomal stability. DNA accessibility is regulated via a complex set of post-translational modifications of histones, also called histone code, and nucleosome remodeling. The chain is Histone H2A type 1-K from Mus musculus (Mouse).